The chain runs to 247 residues: ATP synthase subunit a, chloroplastic (247 aa).

5 consecutive transmembrane segments (helical) span residues 38–58 (QVLITSWVVIAILLGSATVAV), 95–115 (VPFIGTMFLFIFVSNWSGALL), 134–154 (INTTVALALPTSVAYFYAGLT), 199–219 (LVVVVLVSLVPSVVPIPVMFL), and 220–240 (GLFTSGIQALIFATLAAAYIG).

Belongs to the ATPase A chain family. As to quaternary structure, F-type ATPases have 2 components, CF(1) - the catalytic core - and CF(0) - the membrane proton channel. CF(1) has five subunits: alpha(3), beta(3), gamma(1), delta(1), epsilon(1). CF(0) has four main subunits: a, b, b' and c.

The protein resides in the plastid. Its subcellular location is the chloroplast thylakoid membrane. Functionally, key component of the proton channel; it plays a direct role in the translocation of protons across the membrane. The protein is ATP synthase subunit a, chloroplastic of Platanus occidentalis (Sycamore).